The primary structure comprises 239 residues: Immunoglobulin superfamily member 23 (239 aa).

The segment at 63 to 93 is disordered; it reads ELEAQPPTSSSPKGLPGRPRTSQEVPNAEDN. In terms of domain architecture, Ig-like spans 94 to 179; that stretch reads PSLIPLVTFP…ELVSEPVTVS (86 aa). The helical transmembrane segment at 214 to 234 threads the bilayer; it reads LIVAATIGGLVLIGSVCFYIL.

The protein resides in the cell membrane. Its function is as follows. May be involved in osteoclast differentiation. In Mus musculus (Mouse), this protein is Immunoglobulin superfamily member 23.